Consider the following 388-residue polypeptide: Chaperone protein DnaJ (388 aa).

Positions D5 to G70 constitute a J domain. The CR-type zinc finger occupies G135–S213. Residues C148, C151, C165, C168, C187, C190, C201, and C204 each contribute to the Zn(2+) site. CXXCXGXG motif repeat units follow at residues C148 to G155, C165 to G172, C187 to G194, and C201 to G208.

This sequence belongs to the DnaJ family. As to quaternary structure, homodimer. Requires Zn(2+) as cofactor.

The protein localises to the cytoplasm. Participates actively in the response to hyperosmotic and heat shock by preventing the aggregation of stress-denatured proteins and by disaggregating proteins, also in an autonomous, DnaK-independent fashion. Unfolded proteins bind initially to DnaJ; upon interaction with the DnaJ-bound protein, DnaK hydrolyzes its bound ATP, resulting in the formation of a stable complex. GrpE releases ADP from DnaK; ATP binding to DnaK triggers the release of the substrate protein, thus completing the reaction cycle. Several rounds of ATP-dependent interactions between DnaJ, DnaK and GrpE are required for fully efficient folding. Also involved, together with DnaK and GrpE, in the DNA replication of plasmids through activation of initiation proteins. This chain is Chaperone protein DnaJ, found in Buchnera aphidicola subsp. Cinara cedri (strain Cc).